Consider the following 168-residue polypeptide: Lipoprotein signal peptidase (168 aa).

3 helical membrane passes run 6-26 (VLAA…DQIT), 70-90 (WFLA…IAKL), and 98-118 (ALAL…RMLL). Residues Asp-123 and Asp-141 contribute to the active site. A helical transmembrane segment spans residues 139–159 (IADSAICIGAALLVWDSLFGT).

This sequence belongs to the peptidase A8 family.

The protein localises to the cell inner membrane. It catalyses the reaction Release of signal peptides from bacterial membrane prolipoproteins. Hydrolyzes -Xaa-Yaa-Zaa-|-(S,diacylglyceryl)Cys-, in which Xaa is hydrophobic (preferably Leu), and Yaa (Ala or Ser) and Zaa (Gly or Ala) have small, neutral side chains.. It functions in the pathway protein modification; lipoprotein biosynthesis (signal peptide cleavage). This protein specifically catalyzes the removal of signal peptides from prolipoproteins. The sequence is that of Lipoprotein signal peptidase from Teredinibacter turnerae (strain ATCC 39867 / T7901).